The chain runs to 635 residues: Threonine--tRNA ligase (635 aa).

The 58-residue stretch at Met1–Thr58 folds into the TGS domain. Positions Asp237–Pro528 are catalytic. 3 residues coordinate Zn(2+): Cys328, His379, and His505.

It belongs to the class-II aminoacyl-tRNA synthetase family. Homodimer. It depends on Zn(2+) as a cofactor.

It is found in the cytoplasm. It carries out the reaction tRNA(Thr) + L-threonine + ATP = L-threonyl-tRNA(Thr) + AMP + diphosphate + H(+). Its function is as follows. Catalyzes the attachment of threonine to tRNA(Thr) in a two-step reaction: L-threonine is first activated by ATP to form Thr-AMP and then transferred to the acceptor end of tRNA(Thr). Also edits incorrectly charged L-seryl-tRNA(Thr). The protein is Threonine--tRNA ligase of Chlamydia trachomatis serovar A (strain ATCC VR-571B / DSM 19440 / HAR-13).